The sequence spans 105 residues: Pyrimidine/purine nucleoside phosphorylase (105 aa).

Belongs to the nucleoside phosphorylase PpnP family.

It carries out the reaction a purine D-ribonucleoside + phosphate = a purine nucleobase + alpha-D-ribose 1-phosphate. The catalysed reaction is adenosine + phosphate = alpha-D-ribose 1-phosphate + adenine. It catalyses the reaction cytidine + phosphate = cytosine + alpha-D-ribose 1-phosphate. The enzyme catalyses guanosine + phosphate = alpha-D-ribose 1-phosphate + guanine. It carries out the reaction inosine + phosphate = alpha-D-ribose 1-phosphate + hypoxanthine. The catalysed reaction is thymidine + phosphate = 2-deoxy-alpha-D-ribose 1-phosphate + thymine. It catalyses the reaction uridine + phosphate = alpha-D-ribose 1-phosphate + uracil. The enzyme catalyses xanthosine + phosphate = alpha-D-ribose 1-phosphate + xanthine. Catalyzes the phosphorolysis of diverse nucleosides, yielding D-ribose 1-phosphate and the respective free bases. Can use uridine, adenosine, guanosine, cytidine, thymidine, inosine and xanthosine as substrates. Also catalyzes the reverse reactions. The sequence is that of Pyrimidine/purine nucleoside phosphorylase from Albidiferax ferrireducens (strain ATCC BAA-621 / DSM 15236 / T118) (Rhodoferax ferrireducens).